A 315-amino-acid polypeptide reads, in one-letter code: Protein OPG185 (315 aa).

An N-terminal signal peptide occupies residues 1-16; sequence MTRLPILLLLISLVYA. The region spanning 17 to 121 is the Ig-like V-type domain; the sequence is TPFPQTSKKI…NDTDKVDYEE (105 aa). Over 17 to 279 the chain is Virion surface; that stretch reads TPFPQTSKKI…SNYKTKDFVE (263 aa). Cys34 and Cys103 are disulfide-bonded. N-linked (GlcNAc...) asparagine; by host glycans are attached at residues Asn37, Asn69, Asn112, and Asn161. Residues 193–202 are compositionally biased toward polar residues; it reads NTVSASSGES. A disordered region spans residues 193–213; it reads NTVSASSGESTTDETPEPITD. A glycan (N-linked (GlcNAc...) asparagine; by host) is linked at Asn254. The chain crosses the membrane as a helical span at residues 280–303; that stretch reads IFGITALIILSAVAIFCITYYIYN. Residues 304–315 are Intravirion-facing; the sequence is KRSRKYKTENKV.

Belongs to the orthopoxvirus OPG185 family. In terms of assembly, heterodimerizes with OPG040. The heterodimer OPG185-OPG040 interacts with components of the entry fusion complex OPG143 and OPG094. Heterodimer with C3/VPC protein; disulfide-linked. Post-translationally, glycosylated; contains phosphate and sulfate-substituted glycans. O-glycosylation is required for hemagglutination and hemadsorption activities of infected cell membranes.

It localises to the virion membrane. It is found in the host membrane. In terms of biological role, prevents cell to cell fusion by interacting with and directing the viral OPG040 protein on the host plasma membrane. The OPG185-OPG040 complex associates with components of the entry fusion complex (EFC) presumably to avoid superinfection and syncytium formation. Via its interaction with C3/VCP protein, protects the infected cell and probably also the extracellular enveloped virus from complement attack. The polypeptide is Protein OPG185 (OPG185) (Homo sapiens (Human)).